Reading from the N-terminus, the 358-residue chain is tRNA-specific 2-thiouridylase MnmA (358 aa).

Residues G8–S15 and M34 each bind ATP. Catalysis depends on C103, which acts as the Nucleophile. C103 and C199 form a disulfide bridge. G127 is an ATP binding site. The segment at K149–Q151 is interaction with tRNA. The active-site Cysteine persulfide intermediate is the C199. The tract at residues R305 to Y306 is interaction with tRNA.

The protein belongs to the MnmA/TRMU family.

Its subcellular location is the cytoplasm. The catalysed reaction is S-sulfanyl-L-cysteinyl-[protein] + uridine(34) in tRNA + AH2 + ATP = 2-thiouridine(34) in tRNA + L-cysteinyl-[protein] + A + AMP + diphosphate + H(+). Its function is as follows. Catalyzes the 2-thiolation of uridine at the wobble position (U34) of tRNA, leading to the formation of s(2)U34. This Clostridium beijerinckii (strain ATCC 51743 / NCIMB 8052) (Clostridium acetobutylicum) protein is tRNA-specific 2-thiouridylase MnmA.